The sequence spans 633 residues: Polypeptide N-acetylgalactosaminyltransferase 3 (633 aa).

The Cytoplasmic portion of the chain corresponds to 1 to 19 (MAHLKRLVKLHIKRHYHRK). A helical; Signal-anchor for type II membrane protein transmembrane segment spans residues 20–37 (FWKLGAVIFFFLVVLILM). Residues 38–633 (QREVSVQYSK…LQKWIFSQND (596 aa)) are Lumenal-facing. The tract at residues 112-145 (DRPPQDSNAPGASGKPFKITHLSPEEQKEKERGE) is disordered. Residues 134 to 145 (SPEEQKEKERGE) show a composition bias toward basic and acidic residues. The interval 184–293 (LPTTSVIIVF…YGWLEPLLAR (110 aa)) is catalytic subdomain A. Asp277 and His279 together coordinate Mn(2+). Asn297 is a glycosylation site (N-linked (GlcNAc...) asparagine). The interval 356 to 418 (PIKTPTFAGG…PCSVVGHVFR (63 aa)) is catalytic subdomain B. Position 415 (His415) interacts with Mn(2+). The N-linked (GlcNAc...) asparagine glycan is linked to Asn484. In terms of domain architecture, Ricin B-type lectin spans 504–630 (VISGYIKSVG…TDLLQKWIFS (127 aa)). Cys517 and Cys535 are oxidised to a cystine. Asp519, Glu522, His536, and Asn541 together coordinate UDP-N-acetyl-alpha-D-galactosamine. 2 cysteine pairs are disulfide-bonded: Cys561/Cys574 and Cys605/Cys618.

It belongs to the glycosyltransferase 2 family. GalNAc-T subfamily. The cofactor is Mn(2+). As to expression, highly expressed in the reproductive tract, principally in the testis and uterus, and to a lesser degree in the cervix with only trace levels in the ovary. Also expressed at high level in sublingual gland, stomach and colon, with more moderate amounts present in the submandibular and parotid gland as well as the kidney.

The protein localises to the golgi apparatus. It localises to the golgi stack membrane. It catalyses the reaction L-seryl-[protein] + UDP-N-acetyl-alpha-D-galactosamine = a 3-O-[N-acetyl-alpha-D-galactosaminyl]-L-seryl-[protein] + UDP + H(+). The catalysed reaction is L-threonyl-[protein] + UDP-N-acetyl-alpha-D-galactosamine = a 3-O-[N-acetyl-alpha-D-galactosaminyl]-L-threonyl-[protein] + UDP + H(+). It participates in protein modification; protein glycosylation. In terms of biological role, catalyzes the initial reaction in O-linked oligosaccharide biosynthesis, the transfer of an N-acetyl-D-galactosamine residue to a serine or threonine residue on the protein receptor. Has activity toward HIV envelope glycoprotein gp120. Has activity towards EA2, MUC2 and MUC5. Probably glycosylates fibronectin in vivo. Glycosylates FGF23. The sequence is that of Polypeptide N-acetylgalactosaminyltransferase 3 (Galnt3) from Mus musculus (Mouse).